Reading from the N-terminus, the 341-residue chain is Phenylalanine--tRNA ligase alpha subunit (341 aa).

Glu-253 serves as a coordination point for Mg(2+).

This sequence belongs to the class-II aminoacyl-tRNA synthetase family. Phe-tRNA synthetase alpha subunit type 1 subfamily. In terms of assembly, tetramer of two alpha and two beta subunits. Requires Mg(2+) as cofactor.

Its subcellular location is the cytoplasm. It catalyses the reaction tRNA(Phe) + L-phenylalanine + ATP = L-phenylalanyl-tRNA(Phe) + AMP + diphosphate + H(+). In Methylococcus capsulatus (strain ATCC 33009 / NCIMB 11132 / Bath), this protein is Phenylalanine--tRNA ligase alpha subunit.